We begin with the raw amino-acid sequence, 65 residues long: Large ribosomal subunit protein uL30 (65 aa).

This sequence belongs to the universal ribosomal protein uL30 family. In terms of assembly, part of the 50S ribosomal subunit.

The protein is Large ribosomal subunit protein uL30 of Brucella suis (strain ATCC 23445 / NCTC 10510).